Reading from the N-terminus, the 91-residue chain is Uteroglobin (91 aa).

The N-terminal stretch at 1–21 (MKLTIAIVLVTLTLFCRPAST) is a signal peptide.

The protein belongs to the secretoglobin family. In terms of assembly, antiparallel homodimer; disulfide-linked. Interaction with LMBR1L is controversial.

The protein resides in the secreted. Its function is as follows. Binds phosphatidylcholine, phosphatidylinositol, polychlorinated biphenyls (PCB) and weakly progesterone, potent inhibitor of phospholipase A2. This is Uteroglobin (SCGB1A1) from Bos taurus (Bovine).